Reading from the N-terminus, the 120-residue chain is Large ribosomal subunit protein bL17 (120 aa).

The protein belongs to the bacterial ribosomal protein bL17 family. In terms of assembly, part of the 50S ribosomal subunit. Contacts protein L32.

The polypeptide is Large ribosomal subunit protein bL17 (Mesomycoplasma hyopneumoniae (strain 232) (Mycoplasma hyopneumoniae)).